The following is a 157-amino-acid chain: Crossover junction endodeoxyribonuclease RuvC (157 aa).

Catalysis depends on residues Asp-7, Glu-66, and Asp-139. Mg(2+) contacts are provided by Asp-7, Glu-66, and Asp-139.

It belongs to the RuvC family. In terms of assembly, homodimer which binds Holliday junction (HJ) DNA. The HJ becomes 2-fold symmetrical on binding to RuvC with unstacked arms; it has a different conformation from HJ DNA in complex with RuvA. In the full resolvosome a probable DNA-RuvA(4)-RuvB(12)-RuvC(2) complex forms which resolves the HJ. Mg(2+) is required as a cofactor.

It localises to the cytoplasm. It carries out the reaction Endonucleolytic cleavage at a junction such as a reciprocal single-stranded crossover between two homologous DNA duplexes (Holliday junction).. The RuvA-RuvB-RuvC complex processes Holliday junction (HJ) DNA during genetic recombination and DNA repair. Endonuclease that resolves HJ intermediates. Cleaves cruciform DNA by making single-stranded nicks across the HJ at symmetrical positions within the homologous arms, yielding a 5'-phosphate and a 3'-hydroxyl group; requires a central core of homology in the junction. The consensus cleavage sequence is 5'-(A/T)TT(C/G)-3'. Cleavage occurs on the 3'-side of the TT dinucleotide at the point of strand exchange. HJ branch migration catalyzed by RuvA-RuvB allows RuvC to scan DNA until it finds its consensus sequence, where it cleaves and resolves the cruciform DNA. This chain is Crossover junction endodeoxyribonuclease RuvC, found in Helicobacter pylori (strain Shi470).